The following is a 356-amino-acid chain: Cysteine protease XCP2 (356 aa).

Residues methionine 1–alanine 26 form the signal peptide. Residues serine 27–alanine 137 constitute a propeptide, activation peptide. Intrachain disulfides connect cysteine 159–cysteine 201, cysteine 193–cysteine 234, and cysteine 292–cysteine 343. Cysteine 162 is an active-site residue. Asparagine 181 is a glycosylation site (N-linked (GlcNAc...) asparagine). Catalysis depends on residues histidine 298 and asparagine 318.

It belongs to the peptidase C1 family. As to quaternary structure, interacts with PRN2. Mostly expressed in roots, stems and flowers. Confined to tracheary elements, and specifically to xylem.

Its subcellular location is the vacuole. It localises to the cell membrane. In terms of biological role, cysteine protease involved in xylem tracheary element (TE) autolysis during xylogenesis in roots. Participates in micro autolysis within the intact central vacuole before mega autolysis is initiated by tonoplast implosion. Involved in susceptibility to the bacterial plant pathogen Ralstonia solanacearum. The protein is Cysteine protease XCP2 of Arabidopsis thaliana (Mouse-ear cress).